The sequence spans 388 residues: S-adenosylmethionine synthase (388 aa).

His17 contributes to the ATP binding site. Asp19 serves as a coordination point for Mg(2+). Residue Glu45 participates in K(+) binding. L-methionine contacts are provided by Glu58 and Gln102. The tract at residues 102–112 (QSADIAQGVDA) is flexible loop. ATP-binding positions include 167–169 (DSK), 232–233 (RF), Asp241, 247–248 (RK), Ala264, and Lys268. Asp241 contacts L-methionine. Position 272 (Lys272) interacts with L-methionine.

The protein belongs to the AdoMet synthase family. Homotetramer; dimer of dimers. Requires Mg(2+) as cofactor. It depends on K(+) as a cofactor.

It localises to the cytoplasm. It carries out the reaction L-methionine + ATP + H2O = S-adenosyl-L-methionine + phosphate + diphosphate. It functions in the pathway amino-acid biosynthesis; S-adenosyl-L-methionine biosynthesis; S-adenosyl-L-methionine from L-methionine: step 1/1. Functionally, catalyzes the formation of S-adenosylmethionine (AdoMet) from methionine and ATP. The overall synthetic reaction is composed of two sequential steps, AdoMet formation and the subsequent tripolyphosphate hydrolysis which occurs prior to release of AdoMet from the enzyme. This chain is S-adenosylmethionine synthase, found in Paramagnetospirillum magneticum (strain ATCC 700264 / AMB-1) (Magnetospirillum magneticum).